Consider the following 467-residue polypeptide: Cysteine--tRNA ligase (467 aa).

C27 serves as a coordination point for Zn(2+). A 'HIGH' region motif is present at residues 29–39; that stretch reads ATVQGLPHIGH. Residues C209, H234, and E238 each coordinate Zn(2+). The short motif at 265–269 is the 'KMSKS' region element; the sequence is KMSKS. Position 268 (K268) interacts with ATP.

The protein belongs to the class-I aminoacyl-tRNA synthetase family. Monomer. It depends on Zn(2+) as a cofactor.

It localises to the cytoplasm. The enzyme catalyses tRNA(Cys) + L-cysteine + ATP = L-cysteinyl-tRNA(Cys) + AMP + diphosphate. This Mycolicibacterium gilvum (strain PYR-GCK) (Mycobacterium gilvum (strain PYR-GCK)) protein is Cysteine--tRNA ligase.